We begin with the raw amino-acid sequence, 328 residues long: Phenylalanine--tRNA ligase alpha subunit (328 aa).

Glu-253 contacts Mg(2+).

This sequence belongs to the class-II aminoacyl-tRNA synthetase family. Phe-tRNA synthetase alpha subunit type 1 subfamily. Tetramer of two alpha and two beta subunits. The cofactor is Mg(2+).

Its subcellular location is the cytoplasm. The catalysed reaction is tRNA(Phe) + L-phenylalanine + ATP = L-phenylalanyl-tRNA(Phe) + AMP + diphosphate + H(+). The polypeptide is Phenylalanine--tRNA ligase alpha subunit (Actinobacillus pleuropneumoniae serotype 7 (strain AP76)).